The sequence spans 110 residues: MRVKMHVKKGDTVLVASGKYKGRVGKVKEVLPKKYAVIVEGVNIVKKAVRVSPKYPQGGFIEKEAPLHASKVRPICPACGKPTRVRKKFLENGKKIRVCAKCGGALDTEE.

This sequence belongs to the universal ribosomal protein uL24 family. As to quaternary structure, part of the 50S ribosomal subunit.

Functionally, one of two assembly initiator proteins, it binds directly to the 5'-end of the 23S rRNA, where it nucleates assembly of the 50S subunit. In terms of biological role, one of the proteins that surrounds the polypeptide exit tunnel on the outside of the subunit. This chain is Large ribosomal subunit protein uL24, found in Thermus thermophilus (strain ATCC BAA-163 / DSM 7039 / HB27).